A 142-amino-acid chain; its full sequence is Transcriptional regulator MraZ (142 aa).

2 consecutive SpoVT-AbrB domains span residues 5–47 (EYQH…TINE) and 76–119 (ACIV…SREK).

This sequence belongs to the MraZ family. In terms of assembly, forms oligomers.

It localises to the cytoplasm. It is found in the nucleoid. The polypeptide is Transcriptional regulator MraZ (Clostridium botulinum (strain Eklund 17B / Type B)).